The following is a 328-amino-acid chain: Isopenicillin N synthase (328 aa).

4 residues coordinate isopenicillin N: R85, Y89, S181, and Y187. R85, Y89, S181, Y187, H210, and D212 together coordinate N-[(5S)-5-amino-5-carboxypentanoyl]-L-cysteinyl-D-valine. One can recognise a Fe2OG dioxygenase domain in the interval 178–284 (TLSSVSLIRY…RLSLPFFFHA (107 aa)). Residues H210, D212, and H266 each coordinate Fe(2+). R275 is a binding site for 2-oxoglutarate. S277 contributes to the isopenicillin N binding site. S277 is a binding site for N-[(5S)-5-amino-5-carboxypentanoyl]-L-cysteinyl-D-valine.

Belongs to the iron/ascorbate-dependent oxidoreductase family. It depends on Fe cation as a cofactor. Requires L-ascorbate as cofactor.

The catalysed reaction is N-[(5S)-5-amino-5-carboxypentanoyl]-L-cysteinyl-D-valine + O2 = isopenicillin N + 2 H2O. Its pathway is antibiotic biosynthesis; penicillin G biosynthesis; penicillin G from L-alpha-aminoadipate and L-cysteine and L-valine: step 2/3. Its function is as follows. Removes, in the presence of oxygen, 4 hydrogen atoms from delta-L-(alpha-aminoadipyl)-L-cysteinyl-D-valine (ACV) to form the azetidinone and thiazolidine rings of isopenicillin. The protein is Isopenicillin N synthase (pcbC) of Amycolatopsis lactamdurans (Nocardia lactamdurans).